The primary structure comprises 343 residues: Mitochondrial amidoxime-reducing component 1 (343 aa).

Over 1 to 25 (MSNTVFSGAVGPLRAAALSISRHRL) the chain is Mitochondrial matrix. A helical; Signal-anchor for type II membrane protein membrane pass occupies residues 26-44 (PLLCAAGLGLTAVASWMWW). Residues 45–343 (RKRQGEAEDL…DPVYRVTRKG (299 aa)) are Cytoplasmic-facing. Positions 69, 70, and 94 each coordinate Mo-molybdopterin. The interval 95–186 (HWLVVTEEGN…SSQPYRLVHF (92 aa)) is MOSC N-terminal region. Positions 181–339 (YRLVHFEADV…IRVGDPVYRV (159 aa)) constitute an MOSC domain. Mo-molybdopterin-binding residues include serine 215, arginine 242, arginine 276, cysteine 277, and tyrosine 321.

Requires Mo-molybdopterin as cofactor.

The protein localises to the mitochondrion outer membrane. It localises to the membrane. The catalysed reaction is N(omega)-hydroxy-L-arginine + 2 Fe(II)-[cytochrome b5] + 2 H(+) = L-arginine + 2 Fe(III)-[cytochrome b5] + H2O. Catalyzes the reduction of N-oxygenated molecules, acting as a counterpart of cytochrome P450 and flavin-containing monooxygenases in metabolic cycles. As a component of prodrug-converting system, reduces a multitude of N-hydroxylated prodrugs particularly amidoximes, leading to increased drug bioavailability. May be involved in mitochondrial N(omega)-hydroxy-L-arginine (NOHA) reduction, regulating endogenous nitric oxide levels and biosynthesis. Postulated to cleave the N-OH bond of N-hydroxylated substrates in concert with electron transfer from NADH to cytochrome b5 reductase then to cytochrome b5, the ultimate electron donor that primes the active site for substrate reduction. This Xenopus laevis (African clawed frog) protein is Mitochondrial amidoxime-reducing component 1 (mtarc1).